The chain runs to 817 residues: Dolichyl-phosphate-mannose--protein mannosyltransferase 1 (817 aa).

An N-acetylserine modification is found at Ser2. Over 2 to 50 the chain is Cytoplasmic; sequence SEEKTYKRVEQDDPVPELDIKQGPVRPFIVTDPSAELASLRTMVTLKEK. The chain crosses the membrane as a helical span at residues 51–70; the sequence is LLVACLAVFTAVIRLHGLAW. Residues 71-135 are Lumenal-facing; sequence PDSVVFDEVH…DSFPSTTPYV (65 aa). Residues 136-154 traverse the membrane as a helical segment; it reads LMRFFSASLGALTVILMYM. Over 155 to 179 the chain is Cytoplasmic; that stretch reads TLRYSGVRMWVALMSAICFAVENSY. The chain crosses the membrane as a helical span at residues 180–200; the sequence is VTISRYILLDAPLMFFIAAAV. The Lumenal portion of the chain corresponds to 201 to 234; it reads YSFKKYEMYPANSLNAYKSLLATGIALGMASSSK. Residues 235–259 traverse the membrane as a helical segment; that stretch reads WVGLFTVTWVGLLCIWRLWFMIGDL. The Cytoplasmic portion of the chain corresponds to 260 to 273; the sequence is TKSSKSIFKVAFAK. Residues 274-291 traverse the membrane as a helical segment; the sequence is LAFLLGVPFALYLVFFYI. At 292–584 the chain is on the lumenal side; sequence HFQSLTLDGD…GENNRNVYLL (293 aa). 3 consecutive MIR domains span residues 324 to 378, 388 to 448, and 459 to 514; these read VADV…LELY, FQNL…VEID, and ERVI…VENN. Residues Asn390 and Asn513 are each glycosylated (N-linked (GlcNAc...) asparagine). Residues 585 to 605 traverse the membrane as a helical segment; sequence GNAIVWWAVTAFIGIFGLIVI. Over 606–685 the chain is Cytoplasmic; that stretch reads TELFSWQLGK…SYVFRSKRQM (80 aa). Residues 686-710 form a helical membrane-spanning segment; sequence GYAVVITFLAASVYFFKSFSPIIYG. Residues 711–817 lie on the Lumenal side of the membrane; it reads TPWTQELCQK…LKVEKRAVLE (107 aa). An N-linked (GlcNAc...) asparagine glycan is attached at Asn743.

Belongs to the glycosyltransferase 39 family. PMT1 and PMT2 form a functional heterodimer. The complex interacts with endoplasmic reticulum proteins EMP24, ERV25, ERP1, ERP2, CDC48, HRD1, USA1, YOS9, ERO1, PDI1, UBR1, Cue4, DFM1 and TED1. Forms also a minor complex with PMT3.

The protein resides in the endoplasmic reticulum membrane. It catalyses the reaction a di-trans,poly-cis-dolichyl beta-D-mannosyl phosphate + L-seryl-[protein] = 3-O-(alpha-D-mannosyl)-L-seryl-[protein] + a di-trans,poly-cis-dolichyl phosphate + H(+). The catalysed reaction is a di-trans,poly-cis-dolichyl beta-D-mannosyl phosphate + L-threonyl-[protein] = 3-O-(alpha-D-mannosyl)-L-threonyl-[protein] + a di-trans,poly-cis-dolichyl phosphate + H(+). Its pathway is protein modification; protein glycosylation. Its function is as follows. Protein O-mannosyltransferase involved in O-glycosylation which is essential for cell wall rigidity. Forms a heterodimeric complex with PMT2 and more rarely with PMT3 to transfer mannose from Dol-P-mannose to Ser or Thr residues on proteins. The PMT1-PMT2 complex participates in oxidative protein folding, ER-associated protein degradation (ERAD), as well as ER export. Required for incorporation of proteins in the cell wall. The protein is Dolichyl-phosphate-mannose--protein mannosyltransferase 1 of Saccharomyces cerevisiae (strain ATCC 204508 / S288c) (Baker's yeast).